The primary structure comprises 337 residues: Transcription factor HBI1 (337 aa).

The interval 119 to 180 (VALKNKRKPE…SKGASENQKL (62 aa)) is disordered. Basic and acidic residues predominate over residues 126–151 (KPEVKTREEQKTEKKIKVEAETESSM). The segment covering 152–165 (KGKSNMGNTEASSD) has biased composition (polar residues). The bHLH domain maps to 191–241 (QATDRHSLAERARREKISKKMKYLQDIVPGCNKVTGKAGMLDEIINYVQCL).

As to quaternary structure, homodimer. Interacts with IBH1. Highly expressed in hypocotyls and cotyledons. Expressed in leaves, stems, and flowers.

It localises to the nucleus. Atypical bHLH transcription factor that acts as a positive regulator of cell elongation downstream of multiple external and endogenous signals by direct binding to the promoters and activation of the two expansin genes EXPA1 and EXPA8, encoding cell wall loosening enzymes. Transcriptional activity is inhibited when binding to the bHLH transcription factor IBH1. The chain is Transcription factor HBI1 (HBI1) from Arabidopsis thaliana (Mouse-ear cress).